An 869-amino-acid chain; its full sequence is Eukaryotic translation initiation factor 3 subunit C (869 aa).

2 disordered regions span residues 1–92 and 182–242; these read MSRF…KSAK and IKKA…VGKG. Acidic residues predominate over residues 14–55; it reads SSDEEEDLYSDDEEVQEQPEEESSEDDSEEDDDDDDDSDSSS. Over residues 185–203 the composition is skewed to basic and acidic residues; that stretch reads ASKEHQKDIDSFRADKDAY. In terms of domain architecture, PCI spans 607-781; that stretch reads FHMHINLELL…SSIIFRKGVE (175 aa). The disordered stretch occupies residues 803-869; it reads NERTLETRTQ…ALGAAVGSRA (67 aa). A compositionally biased stretch (gly residues) spans 823–843; that stretch reads GRGGRGGNRGGRGGGRGGRGG.

It belongs to the eIF-3 subunit C family. Component of the eukaryotic translation initiation factor 3 (eIF-3) complex.

The protein localises to the cytoplasm. Its function is as follows. Component of the eukaryotic translation initiation factor 3 (eIF-3) complex, which is involved in protein synthesis of a specialized repertoire of mRNAs and, together with other initiation factors, stimulates binding of mRNA and methionyl-tRNAi to the 40S ribosome. The eIF-3 complex specifically targets and initiates translation of a subset of mRNAs involved in cell proliferation. The chain is Eukaryotic translation initiation factor 3 subunit C (nip1) from Botryotinia fuckeliana (strain B05.10) (Noble rot fungus).